A 488-amino-acid polypeptide reads, in one-letter code: ATP synthase subunit beta (488 aa).

Residue 155–162 (GGAGVGKT) coordinates ATP. The tract at residues 467–488 (GFAPDDQNTDADEKPAAQAAAN) is disordered.

This sequence belongs to the ATPase alpha/beta chains family. In terms of assembly, F-type ATPases have 2 components, CF(1) - the catalytic core - and CF(0) - the membrane proton channel. CF(1) has five subunits: alpha(3), beta(3), gamma(1), delta(1), epsilon(1). CF(0) has three main subunits: a(1), b(2) and c(9-12). The alpha and beta chains form an alternating ring which encloses part of the gamma chain. CF(1) is attached to CF(0) by a central stalk formed by the gamma and epsilon chains, while a peripheral stalk is formed by the delta and b chains.

The protein localises to the cell membrane. The catalysed reaction is ATP + H2O + 4 H(+)(in) = ADP + phosphate + 5 H(+)(out). Its function is as follows. Produces ATP from ADP in the presence of a proton gradient across the membrane. The catalytic sites are hosted primarily by the beta subunits. The protein is ATP synthase subunit beta of Lacticaseibacillus casei (strain BL23) (Lactobacillus casei).